Consider the following 528-residue polypeptide: MEKRVVIAVILSIAVLYAYSMIFPPPQKKDVVKPGPVPQSQTAPVQAVSSTSVLPAIMQQGNVSVRDLVVETDLFTAVFSTRGAGLKKLVLKRYKETSGPGGREVVLVNEEAAEKFSLLTEGKSFGIEPTVVYNSISNGLKLAGNEKGTLEFTSTSPTGIVFKKSYIFTGNDYRIDLHQELLNNSPTKFDGSLHLIGNNRIEAKPGDGRFEVYGPVTLADDKINTEKVADFSKGPKQYDKNILWTAFADKYFMNAILSDNNSIAAVRLAKVNTNYLQDDVSSPPLALNPGQSAAVNYRIFYGPKDLEILKGQGSRLEEAIDFGWFSALAKPLLRTLKFFYSYTHNYGIAIIIITVILKLLFFPLTHKSYKSMKEMQKLQPKMAELKEKFKNDRDAMNRAVMDLYKTHKVNPMGGCLPMIVQIPVFFALYKALMFSIELRHAPFMLWIMDLSAKDPYYVTPVIMGVTMFVQQKMTPSNMDPVQAKMMLALPVVFTFMFLNFPSGLVLYWLVNNILTIAQQTYINKSLPS.

Helical transmembrane passes span 5 to 25 (VVIAVILSIAVLYAYSMIFPP), 346 to 366 (YGIAIIIITVILKLLFFPLTH), 416 to 436 (LPMIVQIPVFFALYKALMFSI), and 486 to 506 (MLALPVVFTFMFLNFPSGLVL).

The protein belongs to the OXA1/ALB3/YidC family. Type 1 subfamily. In terms of assembly, interacts with the Sec translocase complex via SecD. Specifically interacts with transmembrane segments of nascent integral membrane proteins during membrane integration.

It localises to the cell inner membrane. In terms of biological role, required for the insertion and/or proper folding and/or complex formation of integral membrane proteins into the membrane. Involved in integration of membrane proteins that insert both dependently and independently of the Sec translocase complex, as well as at least some lipoproteins. Aids folding of multispanning membrane proteins. The protein is Membrane protein insertase YidC of Geotalea uraniireducens (strain Rf4) (Geobacter uraniireducens).